Consider the following 492-residue polypeptide: FAD-linked oxidoreductase pgmH (492 aa).

The FAD-binding PCMH-type domain occupies 54 to 224; sequence SIRLATLVVY…TEFKYRVHKQ (171 aa).

This sequence belongs to the oxygen-dependent FAD-linked oxidoreductase family. Requires FAD as cofactor.

The protein operates within pigment biosynthesis. It functions in the pathway secondary metabolite biosynthesis. Its function is as follows. FAD-linked oxidoreductase; part of the gene cluster that mediates the biosynthesis of pleosporalin A, ascomycone A, as well as a third cryptic naphthoquinone derived pigment, all responsible for the coloration of conidia. Essential for the production of pleosporalin A, but not the 2 other final products. The pathway begins with the biosynthesis of the cyclized heptaketide 3-acetonyl-1,6,8-trihydroxy-2-naphthaldehyde by the NR-PKS pgmA. The C-6 hydroxyl group is further methylated by the O-methyltransferase pgmB to yield fusarubinaldehyde which is in turn oxidized by the cytochrome P450 monooxygenase pgmC at C-9. The C-1 hydroxyl group is then methylated spontaneously. Although pgmE, pgmD and pgmH are essential for the production of pleosporalin A, it is not the case for the 2 other final products and it remains difficult to assign a specific function to each enzyme. PgmF and pgmG seem not to be involved in pigment biosynthesis although they were regulated by the cluster-specific transcription factor pgmR. This is FAD-linked oxidoreductase pgmH from Aspergillus terreus.